We begin with the raw amino-acid sequence, 865 residues long: Bifunctional uridylyltransferase/uridylyl-removing enzyme (865 aa).

Residues 1–318 (MPHVDLNPLK…FPRPDSDARL (318 aa)) are uridylyltransferase. Positions 319–675 (IDDDFRNLRE…VRPTEHGEGL (357 aa)) are uridylyl-removing. Residues 437–559 (VDQHTLAVVR…VGDERRLAAL (123 aa)) form the HD domain. 2 consecutive ACT domains span residues 676-762 (QVMV…RLPH) and 789-865 (RLSV…QQAA). Residues 747 to 767 (DPHAARHAHAPRRLPHSHARR) are disordered. The span at 751–767 (ARHAHAPRRLPHSHARR) shows a compositional bias: basic residues.

Belongs to the GlnD family. Mg(2+) is required as a cofactor.

It carries out the reaction [protein-PII]-L-tyrosine + UTP = [protein-PII]-uridylyl-L-tyrosine + diphosphate. The catalysed reaction is [protein-PII]-uridylyl-L-tyrosine + H2O = [protein-PII]-L-tyrosine + UMP + H(+). With respect to regulation, uridylyltransferase (UTase) activity is inhibited by glutamine, while glutamine activates uridylyl-removing (UR) activity. Its function is as follows. Modifies, by uridylylation and deuridylylation, the PII regulatory proteins (GlnB and homologs), in response to the nitrogen status of the cell that GlnD senses through the glutamine level. Under low glutamine levels, catalyzes the conversion of the PII proteins and UTP to PII-UMP and PPi, while under higher glutamine levels, GlnD hydrolyzes PII-UMP to PII and UMP (deuridylylation). Thus, controls uridylylation state and activity of the PII proteins, and plays an important role in the regulation of nitrogen assimilation and metabolism. The protein is Bifunctional uridylyltransferase/uridylyl-removing enzyme of Bordetella bronchiseptica (strain ATCC BAA-588 / NCTC 13252 / RB50) (Alcaligenes bronchisepticus).